The following is a 294-amino-acid chain: Glyceraldehyde-3-phosphate dehydrogenase (294 aa).

Positions 19, 63, and 105 each coordinate NAD(+). Residues 134–136 and Thr-165 contribute to the D-glyceraldehyde 3-phosphate site; that span reads SCT. Cys-135 (nucleophile) is an active-site residue. The disordered stretch occupies residues 169–188; the sequence is KTVDGPSHKDWRGGRGASQN. D-glyceraldehyde 3-phosphate-binding positions include 194–195 and Arg-217; that span reads TG.

This sequence belongs to the glyceraldehyde-3-phosphate dehydrogenase family. Homotetramer.

It localises to the cytoplasm. It carries out the reaction D-glyceraldehyde 3-phosphate + phosphate + NAD(+) = (2R)-3-phospho-glyceroyl phosphate + NADH + H(+). The protein operates within carbohydrate degradation; glycolysis; pyruvate from D-glyceraldehyde 3-phosphate: step 1/5. Functionally, catalyzes the oxidative phosphorylation of glyceraldehyde 3-phosphate (G3P) to 1,3-bisphosphoglycerate (BPG) using the cofactor NAD. The first reaction step involves the formation of a hemiacetal intermediate between G3P and a cysteine residue, and this hemiacetal intermediate is then oxidized to a thioester, with concomitant reduction of NAD to NADH. The reduced NADH is then exchanged with the second NAD, and the thioester is attacked by a nucleophilic inorganic phosphate to produce BPG. The protein is Glyceraldehyde-3-phosphate dehydrogenase (gap) of Serratia marcescens.